A 219-amino-acid polypeptide reads, in one-letter code: 2-hydroxy-3-keto-5-methylthiopentenyl-1-phosphate phosphatase (219 aa).

This sequence belongs to the HAD-like hydrolase superfamily. MtnX family.

The catalysed reaction is 2-hydroxy-5-methylsulfanyl-3-oxopent-1-enyl phosphate + H2O = 1,2-dihydroxy-5-(methylsulfanyl)pent-1-en-3-one + phosphate. It functions in the pathway amino-acid biosynthesis; L-methionine biosynthesis via salvage pathway; L-methionine from S-methyl-5-thio-alpha-D-ribose 1-phosphate: step 4/6. Functionally, dephosphorylates 2-hydroxy-3-keto-5-methylthiopentenyl-1-phosphate (HK-MTPenyl-1-P) yielding 1,2-dihydroxy-3-keto-5-methylthiopentene (DHK-MTPene). The polypeptide is 2-hydroxy-3-keto-5-methylthiopentenyl-1-phosphate phosphatase (Bacillus thuringiensis subsp. konkukian (strain 97-27)).